The sequence spans 275 residues: tRNA pseudouridine synthase A (275 aa).

The active-site Nucleophile is the aspartate 62. Tyrosine 124 provides a ligand contact to substrate.

This sequence belongs to the tRNA pseudouridine synthase TruA family. In terms of assembly, homodimer.

The enzyme catalyses uridine(38/39/40) in tRNA = pseudouridine(38/39/40) in tRNA. Its function is as follows. Formation of pseudouridine at positions 38, 39 and 40 in the anticodon stem and loop of transfer RNAs. The polypeptide is tRNA pseudouridine synthase A (Herminiimonas arsenicoxydans).